The sequence spans 480 residues: UDP-N-acetylmuramate--L-alanine ligase (480 aa).

122–128 provides a ligand contact to ATP; the sequence is GTHGKTT.

This sequence belongs to the MurCDEF family.

The protein localises to the cytoplasm. It catalyses the reaction UDP-N-acetyl-alpha-D-muramate + L-alanine + ATP = UDP-N-acetyl-alpha-D-muramoyl-L-alanine + ADP + phosphate + H(+). It functions in the pathway cell wall biogenesis; peptidoglycan biosynthesis. Cell wall formation. The protein is UDP-N-acetylmuramate--L-alanine ligase of Pseudomonas aeruginosa (strain LESB58).